The primary structure comprises 309 residues: Olfactory receptor 8B4 (309 aa).

Residues 1–25 are Extracellular-facing; that stretch reads MTLRNSSSVTEFILVGLSEQPELQL. Residue Asn-5 is glycosylated (N-linked (GlcNAc...) asparagine). Residues 26–46 form a helical membrane-spanning segment; sequence PLFLLFLGIYVFTVVGNLGLI. Residues 47–54 lie on the Cytoplasmic side of the membrane; it reads TLIGINPS. Residues 55 to 75 form a helical membrane-spanning segment; sequence LHTPMYFFLFNLSFIDLCYSC. The Extracellular segment spans residues 76 to 98; it reads VFTPKMLNDFVSESIISYVGCMT. A disulfide bond links Cys-96 and Cys-188. Residues 99–119 form a helical membrane-spanning segment; it reads QLFFFCFFVNSECYVLVSMAY. Over 120 to 138 the chain is Cytoplasmic; it reads DRYVAICNPLLYMVTMSPR. The chain crosses the membrane as a helical span at residues 139 to 159; the sequence is VCFLLMFGSYVVGFAGAMAHT. Topologically, residues 160–196 are extracellular; the sequence is GSMLRLTFCDSNVIDHYLCDVLPLLQLSCTSTHVSEL. A helical membrane pass occupies residues 197-216; sequence VFFIVVGVITMLSSISIVIS. Over 217-236 the chain is Cytoplasmic; sequence YALILSNILCIPSAEGRSKA. Residues 237-257 traverse the membrane as a helical segment; it reads FSTWGSHIIAVALFFGSGTFT. The Extracellular segment spans residues 258-270; the sequence is YLTTSFPGSMNHG. The chain crosses the membrane as a helical span at residues 271–291; sequence RFASVFYTNVVPMLNPSIYSL. Over 292-309 the chain is Cytoplasmic; it reads RNKDDKLALGKTLKRVLF.

It belongs to the G-protein coupled receptor 1 family.

Its subcellular location is the cell membrane. In terms of biological role, odorant receptor. This chain is Olfactory receptor 8B4 (OR8B4), found in Homo sapiens (Human).